Here is a 101-residue protein sequence, read N- to C-terminus: Urease subunit beta (101 aa).

The protein belongs to the urease beta subunit family. Heterotrimer of UreA (gamma), UreB (beta) and UreC (alpha) subunits. Three heterotrimers associate to form the active enzyme.

Its subcellular location is the cytoplasm. The enzyme catalyses urea + 2 H2O + H(+) = hydrogencarbonate + 2 NH4(+). The protein operates within nitrogen metabolism; urea degradation; CO(2) and NH(3) from urea (urease route): step 1/1. This chain is Urease subunit beta, found in Burkholderia cenocepacia (strain ATCC BAA-245 / DSM 16553 / LMG 16656 / NCTC 13227 / J2315 / CF5610) (Burkholderia cepacia (strain J2315)).